A 434-amino-acid chain; its full sequence is Probable exopolygalacturonase A (434 aa).

A signal peptide spans 1-19 (MKLPILVTLFITLPALCVS). Asparagine 46, asparagine 57, asparagine 106, asparagine 199, and asparagine 207 each carry an N-linked (GlcNAc...) asparagine glycan. Residues 232-253 (SSNIVIQDSRIVNTDDCVSFKP) form a PbH1 1 repeat. The active-site Proton donor is aspartate 246. An intrachain disulfide couples cysteine 248 to cysteine 265. The N-linked (GlcNAc...) asparagine glycan is linked to asparagine 254. The PbH1 2 repeat unit spans residues 255–275 (STQIVIQNLDCTGSHGISVGS). Histidine 269 is an active-site residue. Asparagine 293, asparagine 329, and asparagine 354 each carry an N-linked (GlcNAc...) asparagine glycan. A disulfide bridge connects residues cysteine 392 and cysteine 398. N-linked (GlcNAc...) asparagine glycosylation occurs at asparagine 400.

Belongs to the glycosyl hydrolase 28 family.

It is found in the secreted. The catalysed reaction is [(1-&gt;4)-alpha-D-galacturonosyl](n) + H2O = alpha-D-galacturonate + [(1-&gt;4)-alpha-D-galacturonosyl](n-1). Its function is as follows. Specific in hydrolyzing the terminal glycosidic bond of polygalacturonic acid and oligogalacturonates. The chain is Probable exopolygalacturonase A (pgxA) from Aspergillus niger (strain ATCC MYA-4892 / CBS 513.88 / FGSC A1513).